The primary structure comprises 283 residues: Thymidylate synthase (283 aa).

Arginine 22 contacts dUMP. The active-site Nucleophile is cysteine 160. Residues 180 to 183 (RSCD), asparagine 191, and 221 to 223 (HIY) contribute to the dUMP site. Aspartate 183 contacts (6R)-5,10-methylene-5,6,7,8-tetrahydrofolate. Serine 282 contacts (6R)-5,10-methylene-5,6,7,8-tetrahydrofolate.

It belongs to the thymidylate synthase family. Bacterial-type ThyA subfamily. As to quaternary structure, homodimer.

Its subcellular location is the cytoplasm. The enzyme catalyses dUMP + (6R)-5,10-methylene-5,6,7,8-tetrahydrofolate = 7,8-dihydrofolate + dTMP. The protein operates within pyrimidine metabolism; dTTP biosynthesis. Functionally, catalyzes the reductive methylation of 2'-deoxyuridine-5'-monophosphate (dUMP) to 2'-deoxythymidine-5'-monophosphate (dTMP) while utilizing 5,10-methylenetetrahydrofolate (mTHF) as the methyl donor and reductant in the reaction, yielding dihydrofolate (DHF) as a by-product. This enzymatic reaction provides an intracellular de novo source of dTMP, an essential precursor for DNA biosynthesis. This chain is Thymidylate synthase, found in Haemophilus influenzae (strain PittGG).